A 133-amino-acid chain; its full sequence is ATP synthase epsilon chain, chloroplastic (133 aa).

It belongs to the ATPase epsilon chain family. F-type ATPases have 2 components, CF(1) - the catalytic core - and CF(0) - the membrane proton channel. CF(1) has five subunits: alpha(3), beta(3), gamma(1), delta(1), epsilon(1). CF(0) has three main subunits: a, b and c.

It is found in the plastid. Its subcellular location is the chloroplast thylakoid membrane. Functionally, produces ATP from ADP in the presence of a proton gradient across the membrane. The sequence is that of ATP synthase epsilon chain, chloroplastic from Piper cenocladum (Ant piper).